The primary structure comprises 355 residues: Uroporphyrinogen decarboxylase (355 aa).

Residues 27-31, aspartate 77, tyrosine 154, threonine 209, and histidine 328 contribute to the substrate site; that span reads RQAGR.

This sequence belongs to the uroporphyrinogen decarboxylase family. In terms of assembly, homodimer.

Its subcellular location is the cytoplasm. The catalysed reaction is uroporphyrinogen III + 4 H(+) = coproporphyrinogen III + 4 CO2. It functions in the pathway porphyrin-containing compound metabolism; protoporphyrin-IX biosynthesis; coproporphyrinogen-III from 5-aminolevulinate: step 4/4. Its function is as follows. Catalyzes the decarboxylation of four acetate groups of uroporphyrinogen-III to yield coproporphyrinogen-III. This Colwellia psychrerythraea (strain 34H / ATCC BAA-681) (Vibrio psychroerythus) protein is Uroporphyrinogen decarboxylase.